Here is a 656-residue protein sequence, read N- to C-terminus: NADH-ubiquinone oxidoreductase chain 5 (656 aa).

The next 17 helical transmembrane spans lie at 5 to 23 (IIIL…GRKL), 30 to 52 (IITC…EVGF), 81 to 103 (LTVS…SISY), 112 to 129 (RFFS…ILVT), 133 to 155 (YLLM…SFWF), 168 to 190 (FLTN…WSLG), 200 to 222 (LAPY…GAMA), 243 to 262 (VSAL…LLMR), 272 to 294 (TVLL…VGLF), 301 to 320 (VIAY…IGLS), 324 to 346 (IALF…AGSI), 367 to 389 (PLTY…LTGF), 409 to 431 (SVYA…VIYL), 452 to 471 (IFLT…FGYL), 514 to 536 (FIFT…GSVF), 607 to 629 (LSTG…FIII), and 634 to 653 (QISS…SLNF).

It belongs to the complex I subunit 5 family.

Its subcellular location is the mitochondrion inner membrane. It carries out the reaction a ubiquinone + NADH + 5 H(+)(in) = a ubiquinol + NAD(+) + 4 H(+)(out). Its function is as follows. Core subunit of the mitochondrial membrane respiratory chain NADH dehydrogenase (Complex I) that is believed to belong to the minimal assembly required for catalysis. Complex I functions in the transfer of electrons from NADH to the respiratory chain. The immediate electron acceptor for the enzyme is believed to be ubiquinone. This chain is NADH-ubiquinone oxidoreductase chain 5 (ND5), found in Cryphonectria parasitica (Chestnut blight fungus).